A 647-amino-acid chain; its full sequence is Exoribonuclease 2 (647 aa).

An RNB domain is found at 190 to 519; the sequence is REDLTSLPFV…NHRLLKAIIK (330 aa). One can recognise an S1 motif domain in the interval 564-646; it reads EQRFSAEVID…ETRSIVARPV (83 aa).

The protein belongs to the RNR ribonuclease family. RNase II subfamily.

Its subcellular location is the cytoplasm. It catalyses the reaction Exonucleolytic cleavage in the 3'- to 5'-direction to yield nucleoside 5'-phosphates.. Its function is as follows. Involved in mRNA degradation. Hydrolyzes single-stranded polyribonucleotides processively in the 3' to 5' direction. The polypeptide is Exoribonuclease 2 (Erwinia tasmaniensis (strain DSM 17950 / CFBP 7177 / CIP 109463 / NCPPB 4357 / Et1/99)).